A 250-amino-acid chain; its full sequence is Protein lin-28 homolog B (250 aa).

Disordered stretches follow at residues 1-27 (MAEAGASKGGEEPGRLPEHEEEEESPL) and 98-126 (RVTGPGGSPCLGSERRPKGKTVQKRKPKG). Residues 9-18 (GGEEPGRLPE) are compositionally biased toward basic and acidic residues. The region spanning 29-102 (HGAGHCKWFN…GLESIRVTGP (74 aa)) is the CSD domain. Positions 114–125 (PKGKTVQKRKPK) are enriched in basic residues. CCHC-type zinc fingers lie at residues 127 to 144 (DRCYNCGGLDHHAKECSL) and 149 to 166 (KKCHYCQSIMHMVANCPH). Positions 129, 132, 137, 142, 151, 154, 159, and 164 each coordinate Zn(2+). A disordered region spans residues 165–250 (PHKTVSQQPT…GPSVQKRKKT (86 aa)). A compositionally biased stretch (polar residues) spans 168–177 (TVSQQPTSSQ). A compositionally biased stretch (low complexity) spans 200–209 (GYSSPSYSQE). A compositionally biased stretch (basic and acidic residues) spans 210 to 219 (GRSEISERSG).

It belongs to the lin-28 family.

The protein resides in the nucleus. Its subcellular location is the nucleolus. In terms of biological role, suppressor of specific microRNA (miRNA) biogenesis. Binds target primary miRNA transcripts and sequester them in the nucleolus, away from the microprocessor complex, hence preventing their processing into mature miRNA. The specific interaction with target pri-miRNAs occurs via an 5'-GGAG-3' motif in the pre-miRNA terminal loop. This is Protein lin-28 homolog B (LIN28B) from Gallus gallus (Chicken).